A 1040-amino-acid chain; its full sequence is Multidrug resistance protein MdtB (1040 aa).

The next 12 membrane-spanning stretches (helical) occupy residues 16 to 36 (FIMR…AGII), 347 to 367 (LMMA…NIPA), 369 to 389 (IIPG…MVFL), 396 to 416 (LTLM…IVVI), 440 to 460 (IGFT…PLLF), 472 to 492 (FAIT…TLTP), 537 to 557 (WLTL…WVFI), 863 to 883 (LGST…VLGI), 888 to 908 (FIHP…ALLA), 911 to 931 (IAGS…IGIV), 968 to 988 (ILMT…STGV), and 998 to 1018 (IGMV…TPVI).

The protein belongs to the resistance-nodulation-cell division (RND) (TC 2.A.6) family. MdtB subfamily. Part of a tripartite efflux system composed of MdtA, MdtB and MdtC. MdtB forms a heteromultimer with MdtC.

It localises to the cell inner membrane. Its function is as follows. The MdtABC tripartite complex confers resistance against novobiocin and deoxycholate. The sequence is that of Multidrug resistance protein MdtB from Escherichia coli O139:H28 (strain E24377A / ETEC).